A 414-amino-acid polypeptide reads, in one-letter code: Probable protein phosphatase 2C 80 (414 aa).

The PPM-type phosphatase domain maps to 174-411 (SCYLPHPEKE…DDITAVVSYV (238 aa)). The Mn(2+) site is built by Asp204, Gly205, Asp336, and Asp402.

The protein belongs to the PP2C family. Requires Mg(2+) as cofactor. Mn(2+) is required as a cofactor.

It catalyses the reaction O-phospho-L-seryl-[protein] + H2O = L-seryl-[protein] + phosphate. It carries out the reaction O-phospho-L-threonyl-[protein] + H2O = L-threonyl-[protein] + phosphate. This chain is Probable protein phosphatase 2C 80, found in Arabidopsis thaliana (Mouse-ear cress).